We begin with the raw amino-acid sequence, 114 residues long: Putative antiporter subunit mnhC2 (114 aa).

A run of 3 helical transmembrane segments spans residues 3-23 (LILL…ILSI), 28-48 (IVIG…SMGT), and 72-92 (AIVL…LVLV).

It belongs to the CPA3 antiporters (TC 2.A.63) subunit C family. May form a heterooligomeric complex that consists of seven subunits: mnhA2, mnhB2, mnhC2, mnhD2, mnhE2, mnhF2 and mnhG2.

It is found in the cell membrane. The chain is Putative antiporter subunit mnhC2 (mnhC2) from Staphylococcus aureus (strain Mu3 / ATCC 700698).